The chain runs to 358 residues: RNA demethylase ALKBH5 (358 aa).

The interval 1 to 50 (MSATYTDLREKLQSLYRDSPKEVRKRKQPTSDTEEEEAASEPEEEEEARK) is disordered. A compositionally biased stretch (basic and acidic residues) spans 7–22 (DLREKLQSLYRDSPKE). Over residues 32–46 (DTEEEEAASEPEEEE) the composition is skewed to acidic residues. Tyr105 is an active-site residue. 5 residues coordinate 2-oxoglutarate: Asn159, Tyr161, His170, His232, and Arg243. An intrachain disulfide couples Cys196 to Cys233. Disordered stretches follow at residues 259–312 (EMKS…RRSV) and 334–358 (DYVD…MRRH). The span at 262–278 (SLSSSYQPERLQGSNRQ) shows a compositional bias: polar residues. Basic residues predominate over residues 279 to 288 (HILKPKRSHR). Residues 289–310 (KADPDAAHRPRILEMDKEENRR) show a composition bias toward basic and acidic residues.

This sequence belongs to the alkB family. In terms of assembly, monomer. Requires Fe(2+) as cofactor.

The protein localises to the nucleus speckle. The catalysed reaction is an N(6)-methyladenosine in mRNA + 2-oxoglutarate + O2 = an adenosine in mRNA + formaldehyde + succinate + CO2. Its function is as follows. Dioxygenase that specifically demethylates N(6)-methyladenosine (m6A) RNA, the most prevalent internal modification of messenger RNA (mRNA) in higher eukaryotes. Demethylates RNA by oxidative demethylation, which requires molecular oxygen, alpha-ketoglutarate and iron. Demethylation of m6A mRNA affects mRNA processing, translation and export. This chain is RNA demethylase ALKBH5 (alkbh5), found in Xenopus tropicalis (Western clawed frog).